A 249-amino-acid polypeptide reads, in one-letter code: MAQAVEEWYRQMPIITRSYLTAAVVTTVGCTLEIISPYHLYLNPKLVVQHYEIWRLVTNFLYFRKMDLDFLFHMFFLARYCKLLEENSFRGRTADFFYMLLFGATVLTGIVLIGGMIPYISETFARILFLSNSLTFMMVYVWSKHNPFIHMSFLGLFTFTAAYLPWVLLGFSILVGSSTWVDLLGMIAGHVYYFLEDVYPRMTGRRPLKTPSFIKALFADDNVVVARPPNAGLGAGARFGAMGADPQAQ.

Over 1 to 21 (MAQAVEEWYRQMPIITRSYLT) the chain is Cytoplasmic. The chain crosses the membrane as a helical span at residues 22–42 (AAVVTTVGCTLEIISPYHLYL). Over 43-96 (NPKLVVQHYEIWRLVTNFLYFRKMDLDFLFHMFFLARYCKLLEENSFRGRTADF) the chain is Lumenal. A helical membrane pass occupies residues 97–117 (FYMLLFGATVLTGIVLIGGMI). Topologically, residues 118 to 122 (PYISE) are cytoplasmic. Residues 123 to 143 (TFARILFLSNSLTFMMVYVWS) traverse the membrane as a helical segment. Topologically, residues 144–152 (KHNPFIHMS) are lumenal. A helical transmembrane segment spans residues 153 to 173 (FLGLFTFTAAYLPWVLLGFSI). The Cytoplasmic segment spans residues 174-249 (LVGSSTWVDL…GAMGADPQAQ (76 aa)).

Belongs to the derlin family.

The protein resides in the endoplasmic reticulum membrane. Its function is as follows. May be involved in the degradation process of specific misfolded endoplasmic reticulum (ER) luminal proteins. This is Derlin-2 (DER2) from Oryza sativa subsp. japonica (Rice).